We begin with the raw amino-acid sequence, 429 residues long: MEYSDVPKFIRDVSIKQHEWMRESIKLIASENITSLAVREACATDFMHRYAEGLPGKRLYQGCKYIDEVETLCIELSKELFKAEHANVQPTSGVVANLAVFFAETKPGDKLMALSVPDGGHISHWKVSAAGIRGLKVINHPFDPEEMNIDADAMVKKILEEKPKLILFGGSLFPFPHPVADAYEAAQEVGAKIAYDGAHVLGLIAGKQFQDPLREGAEYLMGSTHKTFFGPQGGVILTTKENADKIDSHVFPGVVSNHHLHHKAGLAIALAEMLEFGEAYAKQVIKNAKALAQALYERGFNVLCEHKDFTESHQVIIDIESSPDIEFSASELAKMYEEANIILNKNLLPWDDVNNSDNPSGIRLGTQECTRLGMKEKEMEEIAEFMKRIAIDKEKPEKVREDVKEFAKEYSTIHYSFDEGDGFKYLRFY.

120 to 122 (GHI) is a (6S)-5,6,7,8-tetrahydrofolate binding site. Lys-226 carries the post-translational modification N6-(pyridoxal phosphate)lysine.

Belongs to the SHMT family. Homodimer. It depends on pyridoxal 5'-phosphate as a cofactor.

The protein resides in the cytoplasm. It catalyses the reaction 5,10-methylenetetrahydromethanopterin + glycine + H2O = 5,6,7,8-tetrahydromethanopterin + L-serine. The enzyme catalyses L-allo-threonine = acetaldehyde + glycine. The protein operates within amino-acid biosynthesis; glycine biosynthesis; glycine from L-serine: step 1/1. In terms of biological role, catalyzes the reversible interconversion of serine and glycine with tetrahydromethanopterin (H4MPT) serving as the one-carbon carrier. The use of tetrahydrofolate (THF or H4PteGlu) as the pteridine substrate is 450-fold less efficient than that of H4MPT. Also exhibits a pteridine-independent aldolase activity toward beta-hydroxyamino acids, producing glycine and aldehydes, via a retro-aldol mechanism. Thus, is able to catalyze the cleavage of L-allo-threonine and L-threo-beta-phenylserine. This chain is Serine hydroxymethyltransferase, found in Methanocaldococcus jannaschii (strain ATCC 43067 / DSM 2661 / JAL-1 / JCM 10045 / NBRC 100440) (Methanococcus jannaschii).